A 130-amino-acid polypeptide reads, in one-letter code: Large ribosomal subunit protein bL20 (130 aa).

The protein belongs to the bacterial ribosomal protein bL20 family.

Its function is as follows. Binds directly to 23S ribosomal RNA and is necessary for the in vitro assembly process of the 50S ribosomal subunit. It is not involved in the protein synthesizing functions of that subunit. The chain is Large ribosomal subunit protein bL20 from Salinispora tropica (strain ATCC BAA-916 / DSM 44818 / JCM 13857 / NBRC 105044 / CNB-440).